Here is a 52-residue protein sequence, read N- to C-terminus: MFDDLPPISHKEQQEAVERIQELMAKGTSTAEAIKIVADQIRAEYAAKQQGS.

It belongs to the UPF0181 family.

The polypeptide is UPF0181 protein VPA0916 (Vibrio parahaemolyticus serotype O3:K6 (strain RIMD 2210633)).